The primary structure comprises 235 residues: Protein fmp52-1, mitochondrial (235 aa).

The N-terminal 36 residues, 1 to 36 (MANTALIGCTGMVGSFILNNLLAHPSVARVDTISRR), are a transit peptide targeting the mitochondrion.

It belongs to the FMP52 family.

The protein localises to the mitochondrion outer membrane. This is Protein fmp52-1, mitochondrial (fmp521) from Aspergillus oryzae (strain ATCC 42149 / RIB 40) (Yellow koji mold).